Consider the following 172-residue polypeptide: Carotene biosynthesis-related protein CBR, chloroplastic (172 aa).

The interval 41 to 66 is disordered; the sequence is AENNPSTPPPSSPSPPPPPPTPAAPT. A compositionally biased stretch (pro residues) spans 46–63; sequence STPPPSSPSPPPPPPTPA. The next 2 membrane-spanning stretches (helical) occupy residues 111-131 and 152-172; these read PTLI…PAFA and FAMI…IALF.

It belongs to the ELIP/psbS family.

It localises to the plastid. Its subcellular location is the chloroplast membrane. In terms of biological role, putative zeaxanthin binding protein. That forms photoprotective complexes within the light-harvesting antennae. The sequence is that of Carotene biosynthesis-related protein CBR, chloroplastic (CBR) from Dunaliella salina (Green alga).